A 237-amino-acid polypeptide reads, in one-letter code: tRNA (guanine-N(1)-)-methyltransferase (237 aa).

Residues G115 and 134-139 contribute to the S-adenosyl-L-methionine site; that span reads LGDFVL.

The protein belongs to the RNA methyltransferase TrmD family. In terms of assembly, homodimer.

Its subcellular location is the cytoplasm. The enzyme catalyses guanosine(37) in tRNA + S-adenosyl-L-methionine = N(1)-methylguanosine(37) in tRNA + S-adenosyl-L-homocysteine + H(+). Its function is as follows. Specifically methylates guanosine-37 in various tRNAs. This Synechococcus sp. (strain RCC307) protein is tRNA (guanine-N(1)-)-methyltransferase.